The sequence spans 380 residues: Ceramide-binding protein svf1 (380 aa).

The segment at 1–18 is peripherally associates with membranes; it reads MKAWLQSSISYYTGTAEP.

The protein belongs to the SVF1 family.

It is found in the golgi apparatus. The protein localises to the cis-Golgi network membrane. It localises to the endoplasmic reticulum membrane. Its subcellular location is the cytoplasm. The protein resides in the nucleus. Ceramide-binding protein that may transfer ceramides from the endoplasmic reticulum membrane to the cis-Golgi network membrane, and is thereby required for the biosynthesis of complex sphingolipids. In Schizosaccharomyces pombe (strain 972 / ATCC 24843) (Fission yeast), this protein is Ceramide-binding protein svf1.